Consider the following 429-residue polypeptide: Adenylosuccinate synthetase (429 aa).

Residues 12 to 18 and 40 to 42 each bind GTP; these read GDEGKGK and GHT. D13 serves as the catalytic Proton acceptor. 2 residues coordinate Mg(2+): D13 and G40. IMP-binding positions include 13-16, 38-41, T129, R143, Q224, T239, and R303; these read DEGK and NAGH. H41 (proton donor) is an active-site residue. 299–305 provides a ligand contact to substrate; that stretch reads ATTGRKR. Residues R305, 331 to 333, and 413 to 415 each bind GTP; these read KLD and SVG.

Belongs to the adenylosuccinate synthetase family. In terms of assembly, homodimer. Requires Mg(2+) as cofactor.

The protein localises to the cytoplasm. The catalysed reaction is IMP + L-aspartate + GTP = N(6)-(1,2-dicarboxyethyl)-AMP + GDP + phosphate + 2 H(+). It participates in purine metabolism; AMP biosynthesis via de novo pathway; AMP from IMP: step 1/2. Its function is as follows. Plays an important role in the de novo pathway of purine nucleotide biosynthesis. Catalyzes the first committed step in the biosynthesis of AMP from IMP. This chain is Adenylosuccinate synthetase, found in Desulfosudis oleivorans (strain DSM 6200 / JCM 39069 / Hxd3) (Desulfococcus oleovorans).